The following is a 321-amino-acid chain: Glutaminase (321 aa).

Substrate is bound by residues Ser-69, Asn-120, Glu-165, Asn-172, Tyr-196, Tyr-248, and Val-266.

The protein belongs to the glutaminase family. In terms of assembly, homotetramer.

It carries out the reaction L-glutamine + H2O = L-glutamate + NH4(+). This is Glutaminase from Bacteroides thetaiotaomicron (strain ATCC 29148 / DSM 2079 / JCM 5827 / CCUG 10774 / NCTC 10582 / VPI-5482 / E50).